The sequence spans 76 residues: Conotoxin VnMKLT2-013 (76 aa).

Residues 1–23 (MMKLTCVLIIAVLFLTACQLTTA) form the signal peptide. Residues 24-42 (ETRDEYRAVRSSDEVQNSR) constitute a propeptide that is removed on maturation. The segment at 29–49 (YRAVRSSDEVQNSRSTDDCST) is disordered. Intrachain disulfides connect Cys-47–Cys-58, Cys-52–Cys-63, and Cys-57–Cys-72.

This sequence belongs to the conotoxin O1 superfamily. In terms of tissue distribution, expressed by the venom duct.

Its subcellular location is the secreted. The chain is Conotoxin VnMKLT2-013 from Conus ventricosus (Mediterranean cone).